The chain runs to 120 residues: Large ribosomal subunit protein uL18 (120 aa).

Residues 1–29 are disordered; it reads MITKPNKNAGRKKRHAHVRRTLSGTPQRP. Basic residues predominate over residues 9–20; it reads AGRKKRHAHVRR.

Belongs to the universal ribosomal protein uL18 family. In terms of assembly, part of the 50S ribosomal subunit; part of the 5S rRNA/L5/L18/L25 subcomplex. Contacts the 5S and 23S rRNAs.

In terms of biological role, this is one of the proteins that bind and probably mediate the attachment of the 5S RNA into the large ribosomal subunit, where it forms part of the central protuberance. The protein is Large ribosomal subunit protein uL18 of Shouchella clausii (strain KSM-K16) (Alkalihalobacillus clausii).